The following is a 66-amino-acid chain: UPF0337 protein SAG0619 (66 aa).

Residues 1 to 22 (MSQEKLKSKLDQAKGGAKEGFG) form a disordered region.

This sequence belongs to the UPF0337 (CsbD) family.

This is UPF0337 protein SAG0619 from Streptococcus agalactiae serotype V (strain ATCC BAA-611 / 2603 V/R).